The following is a 492-amino-acid chain: 2,3-bisphosphoglycerate-independent phosphoglycerate mutase (492 aa).

Asp-11 and Ser-61 together coordinate Mn(2+). Residue Ser-61 is the Phosphoserine intermediate of the active site. Residues His-118, 147–148, Arg-177, Arg-183, 248–251, and Lys-321 contribute to the substrate site; these read RD and RSDR. Mn(2+) contacts are provided by Asp-387, His-391, Asp-428, His-429, and His-446.

This sequence belongs to the BPG-independent phosphoglycerate mutase family. As to quaternary structure, monomer. Mn(2+) serves as cofactor.

The enzyme catalyses (2R)-2-phosphoglycerate = (2R)-3-phosphoglycerate. It functions in the pathway carbohydrate degradation; glycolysis; pyruvate from D-glyceraldehyde 3-phosphate: step 3/5. Catalyzes the interconversion of 2-phosphoglycerate and 3-phosphoglycerate. The chain is 2,3-bisphosphoglycerate-independent phosphoglycerate mutase from Wolinella succinogenes (strain ATCC 29543 / DSM 1740 / CCUG 13145 / JCM 31913 / LMG 7466 / NCTC 11488 / FDC 602W) (Vibrio succinogenes).